Here is a 121-residue protein sequence, read N- to C-terminus: Small ribosomal subunit protein bS16 (121 aa).

The interval 80 to 121 (AGVREKTERNNPNKAKPGKKAQERAEEKAAKAAEAAEAADAE) is disordered. 2 stretches are compositionally biased toward basic and acidic residues: residues 81 to 90 (GVREKTERNN) and 99 to 110 (KAQERAEEKAAK).

Belongs to the bacterial ribosomal protein bS16 family.

In Ruegeria sp. (strain TM1040) (Silicibacter sp.), this protein is Small ribosomal subunit protein bS16.